Here is a 62-residue protein sequence, read N- to C-terminus: DNA gyrase inhibitor YacG (62 aa).

Zn(2+)-binding residues include cysteine 8, cysteine 11, cysteine 27, and cysteine 31.

It belongs to the DNA gyrase inhibitor YacG family. As to quaternary structure, interacts with GyrB. Zn(2+) is required as a cofactor.

Functionally, inhibits all the catalytic activities of DNA gyrase by preventing its interaction with DNA. Acts by binding directly to the C-terminal domain of GyrB, which probably disrupts DNA binding by the gyrase. The chain is DNA gyrase inhibitor YacG from Actinobacillus pleuropneumoniae serotype 5b (strain L20).